Here is a 284-residue protein sequence, read N- to C-terminus: Tropomyosin (284 aa).

Positions 1 to 284 (MDGIKKKMIA…DQTFAELTGY (284 aa)) form a coiled coil. Residues 111–131 (TKLEEASKTAEESERGRKDLE) form a disordered region.

The protein belongs to the tropomyosin family. Homodimer.

Its function is as follows. Tropomyosin, in association with the troponin complex, plays a central role in the calcium dependent regulation of muscle contraction. The sequence is that of Tropomyosin from Schistosoma japonicum (Blood fluke).